Reading from the N-terminus, the 377-residue chain is GTP 3',8-cyclase (377 aa).

Residues 1–29 form a disordered region; that stretch reads MTTRLYLSPTPPRNDREGASKSTSASIKH. Residues 45–271 form the Radical SAM core domain; the sequence is RFGRIARDLR…FTLSPAKEPR (227 aa). Arginine 54 provides a ligand contact to GTP. Residues cysteine 61 and cysteine 65 each contribute to the [4Fe-4S] cluster site. Residue tyrosine 67 participates in S-adenosyl-L-methionine binding. Residue cysteine 68 coordinates [4Fe-4S] cluster. Arginine 105 is a GTP binding site. Glycine 109 is an S-adenosyl-L-methionine binding site. Threonine 140 is a binding site for GTP. Serine 164 contributes to the S-adenosyl-L-methionine binding site. Residue lysine 201 coordinates GTP. Methionine 235 is an S-adenosyl-L-methionine binding site. Cysteine 304 and cysteine 307 together coordinate [4Fe-4S] cluster. 309-311 contributes to the GTP binding site; that stretch reads RSR. A [4Fe-4S] cluster-binding site is contributed by cysteine 321.

This sequence belongs to the radical SAM superfamily. MoaA family. In terms of assembly, monomer and homodimer. It depends on [4Fe-4S] cluster as a cofactor.

It catalyses the reaction GTP + AH2 + S-adenosyl-L-methionine = (8S)-3',8-cyclo-7,8-dihydroguanosine 5'-triphosphate + 5'-deoxyadenosine + L-methionine + A + H(+). The protein operates within cofactor biosynthesis; molybdopterin biosynthesis. Catalyzes the cyclization of GTP to (8S)-3',8-cyclo-7,8-dihydroguanosine 5'-triphosphate. This is GTP 3',8-cyclase from Corynebacterium glutamicum (strain R).